The following is an 845-amino-acid chain: AdoMet-dependent rRNA methyltransferase SPB1 (845 aa).

S-adenosyl-L-methionine-binding residues include glycine 58, tryptophan 60, aspartate 78, aspartate 94, and aspartate 119. Lysine 159 acts as the Proton acceptor in catalysis. 2 disordered regions span residues 223 to 247 and 279 to 298; these read GGGN…SQRQ and SLNK…DDDH. 2 coiled-coil regions span residues 366-402 and 464-502; these read TEEQ…KEII and DEEE…ERDA. Positions 496–512 are enriched in basic and acidic residues; that stretch reads RKAERDANYRAKQARGD. Disordered stretches follow at residues 496 to 546, 587 to 660, and 788 to 821; these read RKAE…DDDE, ENKT…HQQK, and KLNK…VKGK. Acidic residues-rich tracts occupy residues 513–528, 536–545, 610–624, and 633–648; these read ADDE…NDDV, MESESDDDDD, NEND…ESDF, and DDDD…DDEV. Positions 739-796 form a coiled coil; that stretch reads IKKVLEAQSRKKLRALKRLEKIKKKSDLINEDSGKSERDKADEISKLMKKLNKKQKQK. Over residues 788–797 the composition is skewed to basic residues; that stretch reads KLNKKQKQKP.

It belongs to the class I-like SAM-binding methyltransferase superfamily. RNA methyltransferase RlmE family. SPB1 subfamily. In terms of assembly, component of the nucleolar and nucleoplasmic pre-60S ribosomal particle.

The protein localises to the nucleus. Its subcellular location is the nucleolus. It catalyses the reaction a ribonucleotide in rRNA + S-adenosyl-L-methionine = a 2'-O-methylribonucleotide in rRNA + S-adenosyl-L-homocysteine + H(+). In terms of biological role, required for proper assembly of pre-ribosomal particles during the biogenesis of the 60S ribosomal subunit. The chain is AdoMet-dependent rRNA methyltransferase SPB1 from Candida albicans (strain SC5314 / ATCC MYA-2876) (Yeast).